Here is a 297-residue protein sequence, read N- to C-terminus: MKRPDYRTLQALDAVIRERGFERAAQKLCITQSAVSQRIKQLENMFGQPLLVRTVPPRPTEQGQKLLALLRQVELLEEEWLGDEQTGSTPLLLSLAVNADSLATWLLPALAPVLADSPIRLNLQVEDETRTQERLRRGEVVGAVSIQHQALPSCLVDKLGALDYLFVASKPFAERYFPNGVTRSSLLKAPAVAFDHLDDMHQAFLQQNFDLPPGSVPCHIVNSSEAFVQLARQGTTCCMIPHLQIEKELESGELINLTPGLLQRRMLYWHRFAPESRMMRKVTDALLEYGHKVLRQD.

An HTH lysR-type domain is found at 4-60; it reads PDYRTLQALDAVIRERGFERAAQKLCITQSAVSQRIKQLENMFGQPLLVRTVPPRPT. The segment at residues 21-40 is a DNA-binding region (H-T-H motif); the sequence is FERAAQKLCITQSAVSQRIK.

This sequence belongs to the LysR transcriptional regulatory family. Homodimer.

Its function is as follows. Controls the transcription of genes involved in arginine and lysine metabolism. This is HTH-type transcriptional regulator ArgP from Salmonella choleraesuis (strain SC-B67).